The primary structure comprises 277 residues: Ribonuclease HII (277 aa).

Residues 72–260 form the RNase H type-2 domain; sequence EYIAGIDEAG…IKEMIEMKKE (189 aa). Positions 78, 79, and 170 each coordinate a divalent metal cation.

Belongs to the RNase HII family. Mn(2+) is required as a cofactor. The cofactor is Mg(2+).

It localises to the cytoplasm. The catalysed reaction is Endonucleolytic cleavage to 5'-phosphomonoester.. In terms of biological role, endonuclease that specifically degrades the RNA of RNA-DNA hybrids. This Geobacillus sp. (strain WCH70) protein is Ribonuclease HII.